The following is a 155-amino-acid chain: MRVRLIAVGNKMPKWVTEGYDEYAKRLPKDFALELVEIPMSPRGKNTDIPKAIRKEGDSMLEAIPSGDKVIAMEVLGKEWSTDQLADQTEQWRMDGYNVSLLVGGPDGLDPRCTARADQTWSLSRLTLPHPMVRVILAEQIYRAWTLMNNHPYHR.

Residues Gly104 and 123–128 each bind S-adenosyl-L-methionine; that span reads LSRLTL.

It belongs to the RNA methyltransferase RlmH family. As to quaternary structure, homodimer.

The protein localises to the cytoplasm. It catalyses the reaction pseudouridine(1915) in 23S rRNA + S-adenosyl-L-methionine = N(3)-methylpseudouridine(1915) in 23S rRNA + S-adenosyl-L-homocysteine + H(+). In terms of biological role, specifically methylates the pseudouridine at position 1915 (m3Psi1915) in 23S rRNA. This is Ribosomal RNA large subunit methyltransferase H from Marinomonas sp. (strain MWYL1).